The sequence spans 308 residues: Lipoyl synthase 2 (308 aa).

[4Fe-4S] cluster-binding residues include Cys-49, Cys-54, Cys-60, Cys-75, Cys-79, Cys-82, and Ser-300. The Radical SAM core domain maps to 61 to 289 (YASGTATFLL…KRIAEGLGFK (229 aa)).

Belongs to the radical SAM superfamily. Lipoyl synthase family. The cofactor is [4Fe-4S] cluster.

It is found in the cytoplasm. It catalyses the reaction [[Fe-S] cluster scaffold protein carrying a second [4Fe-4S](2+) cluster] + N(6)-octanoyl-L-lysyl-[protein] + 2 oxidized [2Fe-2S]-[ferredoxin] + 2 S-adenosyl-L-methionine + 4 H(+) = [[Fe-S] cluster scaffold protein] + N(6)-[(R)-dihydrolipoyl]-L-lysyl-[protein] + 4 Fe(3+) + 2 hydrogen sulfide + 2 5'-deoxyadenosine + 2 L-methionine + 2 reduced [2Fe-2S]-[ferredoxin]. The protein operates within protein modification; protein lipoylation via endogenous pathway; protein N(6)-(lipoyl)lysine from octanoyl-[acyl-carrier-protein]: step 2/2. Catalyzes the radical-mediated insertion of two sulfur atoms into the C-6 and C-8 positions of the octanoyl moiety bound to the lipoyl domains of lipoate-dependent enzymes, thereby converting the octanoylated domains into lipoylated derivatives. The sequence is that of Lipoyl synthase 2 from Prochlorococcus marinus (strain SARG / CCMP1375 / SS120).